Consider the following 288-residue polypeptide: Energy-coupling factor transporter ATP-binding protein EcfA2 (288 aa).

In terms of domain architecture, ABC transporter spans 2–244; sequence IKFEKVNYTY…VDFLKAHELG (243 aa). 39–46 contributes to the ATP binding site; that stretch reads GHTGSGKS. Catalysis depends on glutamate 170, which acts as the Proton acceptor.

This sequence belongs to the ABC transporter superfamily. Energy-coupling factor EcfA family. As to quaternary structure, forms a stable energy-coupling factor (ECF) transporter complex composed of 2 membrane-embedded substrate-binding proteins (S component), 2 ATP-binding proteins (A component) and 2 transmembrane proteins (T component). In L.lactis forms a stable complex with EcfA' and EcfT and substrate-binding components. In E.coli forms a stable complex with EcfA, EcfT and individually with 3 tested substrate-binding components (BioY, NiaX and ThiT) with a stoichiometry of 1.1:1:1. The core ECF complex interacts with a number of substrate-specific binding components, including BioY, BioY2, HmpT, NiaX, PanT, QueT, RibU and ThiT.

Its subcellular location is the cell membrane. ATP-binding (A) component of a common energy-coupling factor (ECF) ABC-transporter complex. Unlike classic ABC transporters this ECF transporter provides the energy necessary to transport a number of different substrates. In this organism these probably include biotin, thiamine precursor, niacin, pantothenic acid, queuosine precursor, riboflavin and thiamine. Uptake of niacin or riboflavin into proteosomes containing EcfA1A2T and Niax or RibU has been demonstrated. Uptake requires hydrolyzable Mg-ATP and is substrate-specific; NiaX-containing proteosomes did not transport riboflavin. The polypeptide is Energy-coupling factor transporter ATP-binding protein EcfA2 (Lactococcus lactis subsp. cremoris (strain MG1363)).